Here is a 481-residue protein sequence, read N- to C-terminus: Beta-1,3-glucan-binding protein (481 aa).

A signal peptide spans 1–17 (MKVLVVFIFCLVRSTFG). In terms of domain architecture, CBM39 spans 19–123 (FEVPDALVEV…QKFVVKQLLD (105 aa)). The GH16 domain maps to 211–481 (HRLTIRPVPS…EVDYVKVSAL (271 aa)). N-linked (GlcNAc...) asparagine glycosylation occurs at asparagine 467.

This sequence belongs to the insect beta-1,3-glucan binding protein family. Post-translationally, the N-terminus is blocked. As to expression, hemolymph.

It is found in the secreted. Its function is as follows. Involved in the recognition of invading microorganisms. Binds specifically to beta-1,3-glucan and activates the phenoloxidase cascade. The polypeptide is Beta-1,3-glucan-binding protein (GRP) (Tenebrio molitor (Yellow mealworm beetle)).